The primary structure comprises 286 residues: 2,3,4,5-tetrahydropyridine-2,6-dicarboxylate N-succinyltransferase (286 aa).

Belongs to the transferase hexapeptide repeat family.

It localises to the cytoplasm. The enzyme catalyses (S)-2,3,4,5-tetrahydrodipicolinate + succinyl-CoA + H2O = (S)-2-succinylamino-6-oxoheptanedioate + CoA. It participates in amino-acid biosynthesis; L-lysine biosynthesis via DAP pathway; LL-2,6-diaminopimelate from (S)-tetrahydrodipicolinate (succinylase route): step 1/3. In Rhizobium leguminosarum bv. trifolii (strain WSM2304), this protein is 2,3,4,5-tetrahydropyridine-2,6-dicarboxylate N-succinyltransferase.